A 322-amino-acid chain; its full sequence is Replication factor C small subunit (322 aa).

45–52 (GPPGVGKT) contacts ATP.

It belongs to the activator 1 small subunits family. RfcS subfamily. In terms of assembly, heteromultimer composed of small subunits (RfcS) and large subunits (RfcL).

Its function is as follows. Part of the RFC clamp loader complex which loads the PCNA sliding clamp onto DNA. This chain is Replication factor C small subunit, found in Methanocella arvoryzae (strain DSM 22066 / NBRC 105507 / MRE50).